Consider the following 281-residue polypeptide: MKRIVVVSGLSGAGKTTAMGFLEDLGYFCVDNVPGNILEELLKLFMSSDLEKMAMAIDVRSEHLGDPISAVERIKEKTNTLVIFLEASTEELLRRYALTRRRHPLQKDGIGLEDAIEKERKILSRIKEIADVVIDTTSMNTHQLRETLTHFLVNQSGGTSVRIMSFGFKHGIPMDADFVFDARFLPNPHYVPELSSKTGLDSKVEAYFKNYPVVEEFIEKIYEVLKVAIEEYQRTGRRIVTVGIGCTGGKHRSVYIAHRLKEMLEKEGFTVIEKHRDIEKV.

G9–T16 is an ATP binding site. D58–S61 is a GTP binding site.

It belongs to the RapZ-like family.

Functionally, displays ATPase and GTPase activities. In Thermotoga sp. (strain RQ2), this protein is Nucleotide-binding protein TRQ2_1124.